Reading from the N-terminus, the 119-residue chain is Chorion class CA protein ERA.2 (119 aa).

A signal peptide spans 1-21; the sequence is MSKLVVFLFCIQVCFIQNVYS. The interval 22-55 is left arm; the sequence is QCLGRVGPGGPPLGPYGGPLGGPGYGPVGYGGCG. Residues 56–103 are central domain; the sequence is GYGGSGIGNVAVAGELPVAGSTGVTGQVPVIGAVEFAGPACAVGSVSI. Residues 104–119 are right arm; that stretch reads SGACGPTCGCGGSPFY.

Belongs to the chorion protein family.

In terms of biological role, this protein is one of many from the eggshell of the silk moth. This is Chorion class CA protein ERA.2 (ERA.2) from Bombyx mori (Silk moth).